The following is a 217-amino-acid chain: Somatotropin (217 aa).

Residues 1–26 form the signal peptide; that stretch reads MMAAGPRTSLLLAFALLCLPWTQVVG. A Zn(2+)-binding site is contributed by histidine 46. An intrachain disulfide couples cysteine 79 to cysteine 190. At serine 132 the chain carries Phosphoserine. Glutamate 199 serves as a coordination point for Zn(2+). Cysteines 207 and 215 form a disulfide.

This sequence belongs to the somatotropin/prolactin family.

It localises to the secreted. Plays an important role in growth control. Its major role in stimulating body growth is to stimulate the liver and other tissues to secrete IGF1. It stimulates both the differentiation and proliferation of myoblasts. It also stimulates amino acid uptake and protein synthesis in muscle and other tissues. This Bubalus bubalis (Domestic water buffalo) protein is Somatotropin (GH1).